Reading from the N-terminus, the 385-residue chain is 1-deoxy-D-xylulose 5-phosphate reductoisomerase (385 aa).

The NADPH site is built by Thr10, Gly11, Ser12, Ile13, Asn38, and Asn124. Residue Lys125 participates in 1-deoxy-D-xylulose 5-phosphate binding. Glu126 contributes to the NADPH binding site. Mn(2+) is bound at residue Asp150. Ser151, Glu152, Ser176, and His199 together coordinate 1-deoxy-D-xylulose 5-phosphate. Glu152 lines the Mn(2+) pocket. NADPH is bound at residue Gly205. 4 residues coordinate 1-deoxy-D-xylulose 5-phosphate: Ser212, Asn217, Lys218, and Glu221. Residue Glu221 coordinates Mn(2+).

Belongs to the DXR family. The cofactor is Mg(2+). Mn(2+) is required as a cofactor.

The enzyme catalyses 2-C-methyl-D-erythritol 4-phosphate + NADP(+) = 1-deoxy-D-xylulose 5-phosphate + NADPH + H(+). The protein operates within isoprenoid biosynthesis; isopentenyl diphosphate biosynthesis via DXP pathway; isopentenyl diphosphate from 1-deoxy-D-xylulose 5-phosphate: step 1/6. Catalyzes the NADPH-dependent rearrangement and reduction of 1-deoxy-D-xylulose-5-phosphate (DXP) to 2-C-methyl-D-erythritol 4-phosphate (MEP). The polypeptide is 1-deoxy-D-xylulose 5-phosphate reductoisomerase (Clostridium acetobutylicum (strain ATCC 824 / DSM 792 / JCM 1419 / IAM 19013 / LMG 5710 / NBRC 13948 / NRRL B-527 / VKM B-1787 / 2291 / W)).